We begin with the raw amino-acid sequence, 249 residues long: 2-dehydro-3-deoxy-L-rhamnonate dehydrogenase (NAD(+)) (249 aa).

Residue Tyr-156 is the Proton acceptor of the active site.

It belongs to the short-chain dehydrogenases/reductases (SDR) family. As to quaternary structure, homotetramer.

It carries out the reaction 2-dehydro-3-deoxy-L-rhamnonate + NAD(+) = 2,4-didehydro-3-deoxy-L-rhamnonate + NADH + H(+). The protein operates within carbohydrate degradation; L-rhamnose degradation. Functionally, catalyzes the NAD(+)-dependent dehydrogenation of 2-dehydro-3-deoxy-L-rhamnonate to form 2,4-didehydro-3-deoxy-L-rhamnonate. Does not show any detectable activity in the presence of NADP(+). Catalyzes the fourth step in an alternative pathway for rhamnose utilization that does not involve phosphorylated intermediates. In Sphingomonas sp. (strain SKA58), this protein is 2-dehydro-3-deoxy-L-rhamnonate dehydrogenase (NAD(+)).